The chain runs to 286 residues: Nucleotide-binding protein PSPA7_5038 (286 aa).

Residue 8–15 (GRSGSGKS) coordinates ATP. Residue 60-63 (DARN) coordinates GTP.

The protein belongs to the RapZ-like family.

Functionally, displays ATPase and GTPase activities. The chain is Nucleotide-binding protein PSPA7_5038 from Pseudomonas paraeruginosa (strain DSM 24068 / PA7) (Pseudomonas aeruginosa (strain PA7)).